We begin with the raw amino-acid sequence, 345 residues long: Phenylalanine--tRNA ligase alpha subunit (345 aa).

Mg(2+) is bound at residue Glu-253.

This sequence belongs to the class-II aminoacyl-tRNA synthetase family. Phe-tRNA synthetase alpha subunit type 1 subfamily. As to quaternary structure, tetramer of two alpha and two beta subunits. Mg(2+) is required as a cofactor.

It is found in the cytoplasm. It catalyses the reaction tRNA(Phe) + L-phenylalanine + ATP = L-phenylalanyl-tRNA(Phe) + AMP + diphosphate + H(+). This chain is Phenylalanine--tRNA ligase alpha subunit, found in Lawsonia intracellularis (strain PHE/MN1-00).